Reading from the N-terminus, the 416-residue chain is Probable glucan 1,3-beta-glucosidase A (416 aa).

An N-terminal signal peptide occupies residues 1-22; sequence MIFKFSQKALVALYLVVGLAEA. Glu-211 acts as the Proton donor in catalysis. 2 disulfides stabilise this stretch: Cys-291/Cys-415 and Cys-316/Cys-342. The active-site Nucleophile is Glu-308. N-linked (GlcNAc...) asparagine glycosylation is present at Asn-344.

The protein belongs to the glycosyl hydrolase 5 (cellulase A) family. In terms of assembly, monomer. Mn(2+) is required as a cofactor.

It localises to the secreted. The catalysed reaction is Successive hydrolysis of beta-D-glucose units from the non-reducing ends of (1-&gt;3)-beta-D-glucans, releasing alpha-glucose.. Functionally, beta-glucanases participate in the metabolism of beta-glucan, the main structural component of the cell wall. It could also function biosynthetically as a transglycosylase. This is Probable glucan 1,3-beta-glucosidase A (exgA) from Aspergillus fumigatus (strain ATCC MYA-4609 / CBS 101355 / FGSC A1100 / Af293) (Neosartorya fumigata).